Consider the following 303-residue polypeptide: Polyisoprenyl-teichoic acid--peptidoglycan teichoic acid transferase TagU (303 aa).

The Cytoplasmic segment spans residues 1–4; sequence MKKK. Residues 5 to 25 form a helical; Signal-anchor for type II membrane protein membrane-spanning segment; it reads ILFWVLGILGVLIIGGGIYAY. Topologically, residues 26–303 are extracellular; sequence NVYSSVSNTL…KLRTHLEVTK (278 aa).

The protein belongs to the LytR/CpsA/Psr (LCP) family.

It localises to the cell membrane. It functions in the pathway cell wall biogenesis. In terms of biological role, may catalyze the final step in cell wall teichoic acid biosynthesis, the transfer of the anionic cell wall polymers (APs) from their lipid-linked precursor to the cell wall peptidoglycan (PG). This chain is Polyisoprenyl-teichoic acid--peptidoglycan teichoic acid transferase TagU, found in Bacillus cereus (strain ZK / E33L).